Reading from the N-terminus, the 811-residue chain is Receptor-like protein 46 (811 aa).

Positions 1–21 (MSKQCLLSCFLFFCFFIPQLS) are cleaved as a signal peptide. Residues 22–782 (FSCPQDQRQS…EEEDKEEEET (761 aa)) lie on the Extracellular side of the membrane. Residues Asn46, Asn71, Asn128, and Asn143 are each glycosylated (N-linked (GlcNAc...) asparagine). LRR repeat units lie at residues 104 to 128 (INSLVGLDVSFNNIQGEIPGYAFVN), 129 to 153 (LTSLISLDMCCNRFNGSIPHELFSL), 155 to 177 (NLQRLDLSRNVIGGTLSGDIKEL), 178 to 201 (KNLQELILDENLIGGAIPSEIGSL), 203 to 225 (ELLTLTLRQNMFNSSIPSSVSRL), 226 to 249 (TKLKTIDLQNNFLSSKIPDDIGNL), 251 to 273 (NLSTLSLSMNKLSGGIPSSIHNL), 275 to 298 (NLETLQLENNNGLSGEIPAAWLFG), 299 to 322 (LQKLKVLRLEGNNKLQWNNNGYVF), 324 to 348 (QFKLTHLSLRSCGLEGNIPDWLKNQ), 349 to 369 (TALVYLDLSINRLEGRFPKWL), 370 to 395 (ADLKIRNITLSDNRLTGSLPPNLFQR), 397 to 419 (SLYYLVLSRNNFSGQIPDTIGES), 421 to 442 (VMVLMLSENNFSGSVPKSITKI), 443 to 466 (PFLKLLDLSKNRLSGEFPRFRPES), 468 to 488 (LEWLDISSNEFSGDVPAYFGG), 490 to 510 (TSMLLMSQNNFSGEFPQNFRN), 511 to 534 (LSYLIRLDLHDNKISGTVASLISQ), 536 to 560 (SSSVEVLSLRNNSLKGSIPEGISNL), 561 to 583 (TSLKVLDLSENNLDGYLPSSLGN), 643 to 665 (LYTLLDLSKNKLHGEIPTSLGNL), 666 to 688 (KSLKVLNLSNNEFSGLIPQSFGD), 690 to 713 (EKVESLDLSHNNLTGEIPKTLSKL), and 714 to 738 (SELNTLDLRNNKLKGRIPESPQLDR). An N-linked (GlcNAc...) asparagine glycan is attached at Asn215. Asn251 carries an N-linked (GlcNAc...) asparagine glycan. N-linked (GlcNAc...) asparagine glycosylation occurs at Asn347. Residues Asn376, Asn407, and Asn430 are each glycosylated (N-linked (GlcNAc...) asparagine). Residues Asn499 and Asn510 are each glycosylated (N-linked (GlcNAc...) asparagine). N-linked (GlcNAc...) asparagine glycans are attached at residues Asn546, Asn559, and Asn583. 2 N-linked (GlcNAc...) asparagine glycosylation sites follow: Asn672 and Asn701. Asn747 carries N-linked (GlcNAc...) asparagine glycosylation. The helical transmembrane segment at 783 to 803 (IFSWNAAAIGCSCGFLIAVVF) threads the bilayer. Residues 804-811 (MSYNELWK) lie on the Cytoplasmic side of the membrane.

The protein belongs to the RLP family.

It localises to the cell membrane. The chain is Receptor-like protein 46 from Arabidopsis thaliana (Mouse-ear cress).